A 386-amino-acid polypeptide reads, in one-letter code: Putative prophage major tail sheath protein (386 aa).

This sequence belongs to the myoviridae tail sheath protein family.

The protein localises to the secreted. The sequence is that of Putative prophage major tail sheath protein from Pseudomonas aeruginosa (strain UCBPP-PA14).